The sequence spans 724 residues: Degenerin mec-10 (724 aa).

Residues 1 to 125 are Cytoplasmic-facing; sequence MNRGPPNPRM…GQAPNSLYRA (125 aa). A helical membrane pass occupies residues 126–146; sequence VWVFLLLICAIQFINQAVAVI. The Extracellular portion of the chain corresponds to 147–684; that stretch reads QKYQKMDKIT…FGGHLGLWSG (538 aa). N-linked (GlcNAc...) asparagine glycans are attached at residues N294, N370, N463, N605, and N624. Residues 685–705 form a helical membrane-spanning segment; sequence VSVMTCCEFVCLVLELLYMAV. The Cytoplasmic segment spans residues 706-724; it reads THHITQERIRRRENAANEF.

The protein belongs to the amiloride-sensitive sodium channel (TC 1.A.6) family. In terms of assembly, the channel is probably composed of at least the mec-2, mec-4, mec-6 and mec-10 subunits.

Its subcellular location is the cell membrane. Functionally, amiloride-sensitive sodium channel subunit required for mechanosensory transduction (touch sensitivity). Negatively regulates the turning step of male mating behavior. The sequence is that of Degenerin mec-10 from Caenorhabditis briggsae.